A 364-amino-acid polypeptide reads, in one-letter code: Lipoyl synthase, mitochondrial (364 aa).

Positions 99, 104, 110, 130, 134, 137, and 345 each coordinate [4Fe-4S] cluster. Residues 116-334 (HSTQTATIML…EQRGNELGFL (219 aa)) form the Radical SAM core domain.

It belongs to the radical SAM superfamily. Lipoyl synthase family. The cofactor is [4Fe-4S] cluster.

The protein resides in the mitochondrion. The catalysed reaction is [[Fe-S] cluster scaffold protein carrying a second [4Fe-4S](2+) cluster] + N(6)-octanoyl-L-lysyl-[protein] + 2 oxidized [2Fe-2S]-[ferredoxin] + 2 S-adenosyl-L-methionine + 4 H(+) = [[Fe-S] cluster scaffold protein] + N(6)-[(R)-dihydrolipoyl]-L-lysyl-[protein] + 4 Fe(3+) + 2 hydrogen sulfide + 2 5'-deoxyadenosine + 2 L-methionine + 2 reduced [2Fe-2S]-[ferredoxin]. The protein operates within protein modification; protein lipoylation via endogenous pathway; protein N(6)-(lipoyl)lysine from octanoyl-[acyl-carrier-protein]: step 2/2. In terms of biological role, catalyzes the radical-mediated insertion of two sulfur atoms into the C-6 and C-8 positions of the octanoyl moiety bound to the lipoyl domains of lipoate-dependent enzymes, thereby converting the octanoylated domains into lipoylated derivatives. This Drosophila mojavensis (Fruit fly) protein is Lipoyl synthase, mitochondrial.